Reading from the N-terminus, the 382-residue chain is tRNA-queuosine alpha-mannosyltransferase (382 aa).

The protein belongs to the glycosyltransferase group 1 family. Glycosyltransferase 4 subfamily.

The protein resides in the cytoplasm. The protein localises to the nucleus. The enzyme catalyses queuosine(34) in tRNA(Asp) + GDP-alpha-D-mannose = O-4''-alpha-D-mannosylqueuosine(34) in tRNA(Asp) + GDP + H(+). Functionally, glycosyltransferase that specifically catalyzes mannosylation of cytoplasmic tRNA(Asp) modified with queuosine at position 34 (queuosine(34)). Mannosylates the cyclopentene moiety of queuosine(34) in tRNA(Asp) to form mannosyl-queuosine(34). Mannosylation of queuosine(34) in tRNA(Asp) is required to slow-down elongation at cognate codons, GAC and GAU, thereby regulating protein translation. The sequence is that of tRNA-queuosine alpha-mannosyltransferase (GTDC1) from Gallus gallus (Chicken).